Consider the following 651-residue polypeptide: MNSVGRRGPRRANQNGTRRRRRRTVRPVVVVQPNRAGPRRRNGRRKGRGGANFVFRPTGGTEVFVFSVDNLKANSSGAIKFGPSLSQCPALSDGILKSYHRYKITSIRVEFKSHASANTAGAIFIELDTACKQSALGSYINSFTISKTASKTFRSEAINGKEFQESTIDQFWMLYKANGTTTDTAGQFIITMSVSLMTAKXVDSSTPEPKPAPEPTPTPQPTPAPQPTPEPTPAPVPKRFFEYIGTPTGTISTRENTDSISVSKLGGQSMQYIENEKCETKVIDSFWSTNNNVSAQAAFVYPVPEGSYSVNISCEGFQSVDHIGGNEDGYWIGLIAYSNSSGDNWGVGNYKGCSFKNFLATNTWRPGHKDLKLTDCQFTDGQIVERDAVMSFHVEATGKDASFYLMAPKTMKTDKYNYVVSYGGYTNKRMEFGTISVTCDESDVEAERITRHAETPIRSKHILVSERYAEPLPTIVNQGLCDVKTPEQEQTLVDEDDRQTVSTESDIALLEYEAATAEIPDAEEDVLPSKEQLSSKPMDTSGNIIPKPKEPEVLGTYQGQNIYPEDVPPMARQKLREAANAPSTLLYERRTPKKSGNFLSRLVEANRSPTTPTAPSVSTTSNMTREQLREYTRIRNSSGITAAKAYKAQFQ.

Disordered stretches follow at residues 1–25 (MNSVGRRGPRRANQNGTRRRRRRTV), 33–52 (PNRAGPRRRNGRRKGRGGAN), 201–239 (XVDSSTPEPKPAPEPTPTPQPTPAPQPTPEPTPAPVPKR), 525–552 (DVLPSKEQLSSKPMDTSGNIIPKPKEPE), and 606–626 (NRSPTTPTAPSVSTTSNMTRE). The segment covering 37 to 48 (GPRRRNGRRKGR) has biased composition (basic residues). The segment at 202 to 650 (VDSSTPEPKP…TAAKAYKAQF (449 aa)) is readthrough domain (RTD). The segment covering 208–236 (EPKPAPEPTPTPQPTPAPQPTPEPTPAPV) has biased composition (pro residues). The segment covering 531 to 543 (EQLSSKPMDTSGN) has biased composition (polar residues). Low complexity predominate over residues 608–621 (SPTTPTAPSVSTTS).

Belongs to the luteoviruses readthrough protein family. In virus particles, more than 200 amino acids are proteolytically cleaved releasing the C-terminus part of the RTD domain. The cleaved product remains attached to the virus particle.

The protein localises to the membrane. Its subcellular location is the virion. The protein resides in the host cell junction. It localises to the host plasmodesma. It is found in the host periplasm. Its function is as follows. Minor component of the viral capsid involved in aphid transmission and virus accumulation in the host. Required fro the virus to move through the aphid. The RTD domain of the protein is exposed on the surface of the particle and determines the vector specificity and intestinal tropism in the aphid. The protein is Readthrough protein P3-RTD of Avena byzantina (Oat).